The following is a 393-amino-acid chain: Phosphoglycerate kinase (393 aa).

Substrate-binding positions include 22-24, Arg-37, 60-63, Arg-119, and Arg-152; these read DFN and HLGR. ATP contacts are provided by residues Lys-202, Gly-293, Glu-324, and 350–353; that span reads GGDS.

It belongs to the phosphoglycerate kinase family. As to quaternary structure, monomer.

Its subcellular location is the cytoplasm. The catalysed reaction is (2R)-3-phosphoglycerate + ATP = (2R)-3-phospho-glyceroyl phosphate + ADP. It participates in carbohydrate degradation; glycolysis; pyruvate from D-glyceraldehyde 3-phosphate: step 2/5. This is Phosphoglycerate kinase from Borrelia garinii subsp. bavariensis (strain ATCC BAA-2496 / DSM 23469 / PBi) (Borreliella bavariensis).